The sequence spans 356 residues: DNA polymerase IV (356 aa).

One can recognise a UmuC domain in the interval Ile-6–Gly-187. Residues Asp-10 and Asp-105 each contribute to the Mg(2+) site. Residue Glu-106 is part of the active site.

This sequence belongs to the DNA polymerase type-Y family. Monomer. It depends on Mg(2+) as a cofactor.

The protein resides in the cytoplasm. It catalyses the reaction DNA(n) + a 2'-deoxyribonucleoside 5'-triphosphate = DNA(n+1) + diphosphate. In terms of biological role, poorly processive, error-prone DNA polymerase involved in untargeted mutagenesis. Copies undamaged DNA at stalled replication forks, which arise in vivo from mismatched or misaligned primer ends. These misaligned primers can be extended by PolIV. Exhibits no 3'-5' exonuclease (proofreading) activity. May be involved in translesional synthesis, in conjunction with the beta clamp from PolIII. This is DNA polymerase IV from Halorhodospira halophila (strain DSM 244 / SL1) (Ectothiorhodospira halophila (strain DSM 244 / SL1)).